Reading from the N-terminus, the 122-residue chain is Large ribosomal subunit protein uL14 (122 aa).

Belongs to the universal ribosomal protein uL14 family. As to quaternary structure, part of the 50S ribosomal subunit. Forms a cluster with proteins L3 and L19. In the 70S ribosome, L14 and L19 interact and together make contacts with the 16S rRNA in bridges B5 and B8.

In terms of biological role, binds to 23S rRNA. Forms part of two intersubunit bridges in the 70S ribosome. This chain is Large ribosomal subunit protein uL14, found in Francisella philomiragia subsp. philomiragia (strain ATCC 25017 / CCUG 19701 / FSC 153 / O#319-036).